Here is a 210-residue protein sequence, read N- to C-terminus: HTH-type transcriptional regulator MtrR (210 aa).

The 61-residue stretch at Leu9 to Ile69 folds into the HTH tetR-type domain. A DNA-binding region (H-T-H motif) is located at residues Ser32 to Phe51.

As to quaternary structure, homodimer. Binds to DNA as a pair of dimers.

Its activity is regulated as follows. DNA binding is affected significantly by increasing the NaCl concentration. Its function is as follows. Controls the permeability of the cell envelope to hydrophobic compounds such as antibiotics and detergents. Represses transcription of the mtrCDE-encoded efflux pump by binding within the mtrCDE promoter. Also negatively regulates the expression of farR, by binding to its promoter region, leading indirectly to the positive regulation of expression of the farAB-encoded efflux pump. In Neisseria gonorrhoeae, this protein is HTH-type transcriptional regulator MtrR.